The primary structure comprises 204 residues: Imidazole glycerol phosphate synthase subunit HisH 1 (204 aa).

The Glutamine amidotransferase type-1 domain occupies 5–204; that stretch reads KVVIIDTGCA…AKLIQNFLEL (200 aa). Cys80 (nucleophile) is an active-site residue. Catalysis depends on residues His186 and Glu188.

In terms of assembly, heterodimer of HisH and HisF.

The protein resides in the cytoplasm. The catalysed reaction is 5-[(5-phospho-1-deoxy-D-ribulos-1-ylimino)methylamino]-1-(5-phospho-beta-D-ribosyl)imidazole-4-carboxamide + L-glutamine = D-erythro-1-(imidazol-4-yl)glycerol 3-phosphate + 5-amino-1-(5-phospho-beta-D-ribosyl)imidazole-4-carboxamide + L-glutamate + H(+). It catalyses the reaction L-glutamine + H2O = L-glutamate + NH4(+). Its pathway is amino-acid biosynthesis; L-histidine biosynthesis; L-histidine from 5-phospho-alpha-D-ribose 1-diphosphate: step 5/9. In terms of biological role, IGPS catalyzes the conversion of PRFAR and glutamine to IGP, AICAR and glutamate. The HisH subunit provides the glutamine amidotransferase activity that produces the ammonia necessary to HisF for the synthesis of IGP and AICAR. This Vibrio vulnificus (strain YJ016) protein is Imidazole glycerol phosphate synthase subunit HisH 1 (hisH1).